Here is a 228-residue protein sequence, read N- to C-terminus: NAD(P)H-hydrate epimerase (228 aa).

One can recognise a YjeF N-terminal domain in the interval 9-215; sequence AISIDEELFN…RLEEKYSLEL (207 aa). 58 to 62 is a (6S)-NADPHX binding site; that stretch reads NNGGD. The K(+) site is built by Asn-59 and Asp-123. Residues 127-133 and Asp-156 contribute to the (6S)-NADPHX site; that span reads GFSFKPP. Residue Ser-159 coordinates K(+).

The protein belongs to the NnrE/AIBP family. It depends on K(+) as a cofactor.

The catalysed reaction is (6R)-NADHX = (6S)-NADHX. The enzyme catalyses (6R)-NADPHX = (6S)-NADPHX. Catalyzes the epimerization of the S- and R-forms of NAD(P)HX, a damaged form of NAD(P)H that is a result of enzymatic or heat-dependent hydration. This is a prerequisite for the S-specific NAD(P)H-hydrate dehydratase to allow the repair of both epimers of NAD(P)HX. This Anopheles darlingi (Mosquito) protein is NAD(P)H-hydrate epimerase.